Reading from the N-terminus, the 317-residue chain is MPVLGSQRRLLGSLNCTPPATLPLTLAPNRTGPQCLEVSIPDGLFLSLGLVSLVENVLVVAAIAKNRNLHSPMYYFICCLAMSDLLVSVSNVLETAVMLLLEAGVLATRAAVVQQLDNVIDVLICSSMVSSLCFLGAIAVDRYISIFYALRYHSVVTLPRAWRIIAAIWVASILTSVLSITYYNHTVVLLCLVGFFIAMLALMAVLYVHMLARACQHARGIARLQKRQRPIHQGFGLKGAATLTILLGVFFLCWGPFFLHLSLIVLCPQHPTCGCIFKNFNLFLALIICNAIVDPLIYAFRSQELRKTLQEVLQCSW.

Residues 1–37 lie on the Extracellular side of the membrane; that stretch reads MPVLGSQRRLLGSLNCTPPATLPLTLAPNRTGPQCLE. Asparagine 29 carries an N-linked (GlcNAc...) asparagine glycan. The chain crosses the membrane as a helical span at residues 38 to 63; sequence VSIPDGLFLSLGLVSLVENVLVVAAI. Residues 64 to 72 lie on the Cytoplasmic side of the membrane; the sequence is AKNRNLHSP. A helical transmembrane segment spans residues 73–93; it reads MYYFICCLAMSDLLVSVSNVL. The Extracellular portion of the chain corresponds to 94–118; it reads ETAVMLLLEAGVLATRAAVVQQLDN. Residues 119–140 form a helical membrane-spanning segment; that stretch reads VIDVLICSSMVSSLCFLGAIAV. Topologically, residues 141 to 163 are cytoplasmic; that stretch reads DRYISIFYALRYHSVVTLPRAWR. Residues 164-183 form a helical membrane-spanning segment; sequence IIAAIWVASILTSVLSITYY. At 184-191 the chain is on the extracellular side; it reads NHTVVLLC. The helical transmembrane segment at 192–211 threads the bilayer; that stretch reads LVGFFIAMLALMAVLYVHML. Topologically, residues 212–240 are cytoplasmic; it reads ARACQHARGIARLQKRQRPIHQGFGLKGA. The chain crosses the membrane as a helical span at residues 241 to 266; sequence ATLTILLGVFFLCWGPFFLHLSLIVL. Residues 267–279 lie on the Extracellular side of the membrane; sequence CPQHPTCGCIFKN. The helical transmembrane segment at 280-300 threads the bilayer; sequence FNLFLALIICNAIVDPLIYAF. The Cytoplasmic segment spans residues 301–317; sequence RSQELRKTLQEVLQCSW. Cysteine 315 carries the S-palmitoyl cysteine lipid modification.

It belongs to the G-protein coupled receptor 1 family. Interacts with MGRN1, but does not undergo MGRN1-mediated ubiquitination; this interaction competes with GNAS-binding and thus inhibits agonist-induced cAMP production. Interacts with OPN3; the interaction results in a decrease in MC1R-mediated cAMP signaling and ultimately a decrease in melanin production in melanocytes.

It is found in the cell membrane. In terms of biological role, receptor for MSH (alpha, beta and gamma) and ACTH. The activity of this receptor is mediated by G proteins which activate adenylate cyclase. Mediates melanogenesis, the production of eumelanin (black/brown) and phaeomelanin (red/yellow), via regulation of cAMP signaling in melanocytes. The polypeptide is Melanocyte-stimulating hormone receptor (MC1R) (Ovis aries (Sheep)).